The following is a 926-amino-acid chain: Beta-mannosidase A (926 aa).

A signal peptide spans 1–21 (MHVKAETVLALLTPAPPSVVG). 5 N-linked (GlcNAc...) asparagine glycosylation sites follow: N40, N242, N277, N311, and N342. Catalysis depends on E474, which acts as the Proton donor. N-linked (GlcNAc...) asparagine glycans are attached at residues N532, N603, N626, N653, N733, N756, N785, N793, N819, and N905.

The protein belongs to the glycosyl hydrolase 2 family. Beta-mannosidase A subfamily. As to quaternary structure, homodimer.

The protein resides in the secreted. It catalyses the reaction Hydrolysis of terminal, non-reducing beta-D-mannose residues in beta-D-mannosides.. It participates in glycan metabolism; N-glycan degradation. In terms of biological role, exoglycosidase that cleaves the single beta-linked mannose residue from the non-reducing end of beta-mannosidic oligosaccharides of various complexity and length. Involved in the degradation of polymeric mannan and galactomannan. This is Beta-mannosidase A (mndA) from Aspergillus fumigatus (strain ATCC MYA-4609 / CBS 101355 / FGSC A1100 / Af293) (Neosartorya fumigata).